We begin with the raw amino-acid sequence, 342 residues long: MSKGTSSDTSLGRVSRAAFPSPTAAEMAEISRIQYEMEYTEGISQRMRVPEKLKVAPPNADLEQGFQEGVPNASVIMQVPERIVVAGNNEDVSFSRPADLDLIQSTPFKPLALKTPPRVLTLSERPLDFLDLERPPTTPQNEEIRAVGRLKRERSMSENAVRQNGQLVRNDSLWHRSDSAPRNKISRFQAPISAPEYTVTPSPQQARVCPPHMLPEDGANLSSARGILSLIQSSTRRAYQQILDVLDENRRPVLRGGSAAATSNPHHDNVRYGISNIDTTIEGTSDDLTVVDAASLRRQIIKLNRRLQLLEEENKERAKREMVMYSITVAFWLLNSWLWFRR.

Residues 1 to 322 (MSKGTSSDTS…ENKERAKREM (322 aa)) are Cytoplasmic-facing. A Phosphothreonine modification is found at Thr-115. Ala-146 carries the phosphoserine modification. Arg-149 is subject to Phosphothreonine. A phosphoserine mark is found at Lys-151, Ser-155, Ser-157, and Ser-172. Residue Thr-200 is modified to Phosphothreonine. Phosphoserine occurs at positions 202, 229, 233, and 295. Positions 291–322 (VDAASLRRQIIKLNRRLQLLEEENKERAKREM) form a coiled coil. The helical; Anchor for type IV membrane protein transmembrane segment at 323-340 (VMYSITVAFWLLNSWLWF) threads the bilayer. Over 341 to 342 (RR) the chain is Mitochondrial intermembrane.

The protein belongs to the Tango11 family. In terms of assembly, homodimer. Interacts with DNM1L. Interacts with C11orf65/MFI; the interaction inhibits MFF interaction with DNM1L. Highly expressed in heart, kidney, liver, brain, muscle, and stomach.

The protein localises to the mitochondrion outer membrane. It localises to the peroxisome. It is found in the cytoplasmic vesicle. Its subcellular location is the secretory vesicle. The protein resides in the synaptic vesicle. In terms of biological role, plays a role in mitochondrial and peroxisomal fission. Promotes the recruitment and association of the fission mediator dynamin-related protein 1 (DNM1L) to the mitochondrial surface. May be involved in regulation of synaptic vesicle membrane dynamics by recruitment of DNM1L to clathrin-containing vesicles. In Homo sapiens (Human), this protein is Mitochondrial fission factor (MFF).